The following is a 296-amino-acid chain: Enoyl-CoA hydratase ACTT3 (296 aa).

A Peroxisomal targeting signal type 1 motif is present at residues 294–296 (PKL).

It belongs to the enoyl-CoA hydratase/isomerase family.

The protein localises to the peroxisome. It carries out the reaction a (3S)-3-hydroxyacyl-CoA = a (2E)-enoyl-CoA + H2O. The enzyme catalyses a 4-saturated-(3S)-3-hydroxyacyl-CoA = a (3E)-enoyl-CoA + H2O. It functions in the pathway mycotoxin biosynthesis. Its function is as follows. Enoyl-CoA hydratase; part of the gene clusters that mediate the biosynthesis of the host-selective toxins (HSTs) ACT-toxins responsible for brown spot of tangerine disease by the tangerine pathotype which affects tangerines and mandarins. ACT-toxins consist of three moieties, 9,10-epoxy-8-hydroxy-9-methyl-decatrienoic acid (EDA), valine and a polyketide. ACT-toxin I is toxic to both citrus and pear; toxin II the 5''-deoxy derivative of ACT-toxin I, is highly toxic to pear and slightly toxic to citrus. On cellular level, ACT-toxins affect plasma membrane of susceptible cells and cause a sudden increase in loss of K(+) after a few minutes of toxin treatment. The acyl-CoA ligase ACTT1, the hydrolase ACTT2, the enoyl-CoA hydratases ACTT3 and ACTT6, and the acyl-CoA synthetase ACTT5 are all involved in the biosynthesis of the AK-, AF- and ACT-toxin common 9,10-epoxy-8-hydroxy-9-methyl-decatrienoic acid (EDA) structural moiety. The exact role of each enzyme, and of additional enzymes identified within the AF-toxin clusters have still to be determined. On the other hand, ACTTS1 to ACTTS4 are specific to the tangerine pathotype. The function of ACTTS3 is to elongate the polyketide chain portion of ACT-toxin that is unique to this toxin. The enoyl-reductase ACTTS2 might complement the missing enoyl-reductase (ER) domain in ACTTS3 in the synthesis of the polyketide portion of ACT-toxin. The roles of the nonribosomal peptide synthetases-related proteins ACTTS1 and ACTTS4 have also still not been elucidated. This is Enoyl-CoA hydratase ACTT3 from Alternaria alternata (Alternaria rot fungus).